The sequence spans 558 residues: Glucose-6-phosphate isomerase (558 aa).

Glu362 functions as the Proton donor in the catalytic mechanism. Residues His393 and Lys523 contribute to the active site.

The protein belongs to the GPI family.

It is found in the cytoplasm. The catalysed reaction is alpha-D-glucose 6-phosphate = beta-D-fructose 6-phosphate. The protein operates within carbohydrate degradation; glycolysis; D-glyceraldehyde 3-phosphate and glycerone phosphate from D-glucose: step 2/4. The sequence is that of Glucose-6-phosphate isomerase (Pgi) from Drosophila melanogaster (Fruit fly).